The primary structure comprises 273 residues: Undecaprenyl-diphosphatase (273 aa).

7 helical membrane-spanning segments follow: residues 6–26, 45–65, 90–110, 116–136, 190–210, 222–242, and 252–272; these read SLLI…LPVS, AKTF…VMFW, LTLI…LLFH, LFNP…LIAA, YAAS…ATAL, GDIP…LIAI, and ISFI…YVVF.

Belongs to the UppP family.

It localises to the cell inner membrane. The catalysed reaction is di-trans,octa-cis-undecaprenyl diphosphate + H2O = di-trans,octa-cis-undecaprenyl phosphate + phosphate + H(+). Its function is as follows. Catalyzes the dephosphorylation of undecaprenyl diphosphate (UPP). Confers resistance to bacitracin. The polypeptide is Undecaprenyl-diphosphatase (Escherichia coli O139:H28 (strain E24377A / ETEC)).